Reading from the N-terminus, the 294-residue chain is Glycine N-acyltransferase-like protein 2 (294 aa).

K19 carries the N6-acetyllysine modification.

This sequence belongs to the glycine N-acyltransferase family. Post-translationally, acetylation at Lys-19 drastically decreases the production of N-oleoyl and N-arachidonoyl glycines. In terms of tissue distribution, expressed at highest levels in salivary gland and trachea. Also detected in thyroid gland, spinal cord, prostate, lung and fetal brain.

It localises to the endoplasmic reticulum. The enzyme catalyses an acyl-CoA + glycine = an N-acylglycine + CoA + H(+). It carries out the reaction (9Z)-hexadecenoyl-CoA + glycine = N-(9Z-hexadecenoyl)-glycine + CoA + H(+). It catalyses the reaction octadecanoyl-CoA + glycine = N-octadecanoylglycine + CoA + H(+). The catalysed reaction is (5Z,8Z,11Z,14Z)-eicosatetraenoyl-CoA + glycine = N-(5Z,8Z,11Z,14Z)-eicosatetraenoyl-glycine + CoA + H(+). The enzyme catalyses (9Z)-octadecenoyl-CoA + glycine = N-(9Z-octadecenoyl)glycine + CoA + H(+). It carries out the reaction octanoyl-CoA + glycine = N-octanoylglycine + CoA + H(+). It catalyses the reaction decanoyl-CoA + glycine = N-decanoylglycine + CoA + H(+). The catalysed reaction is tetradecanoyl-CoA + glycine = N-tetradecanoylglycine + CoA + H(+). The enzyme catalyses dodecanoyl-CoA + glycine = N-dodecanoylglycine + CoA + H(+). It carries out the reaction (9Z,12Z)-octadecadienoyl-CoA + glycine = N-(9Z,12Z-octadecadienoyl)-glycine + CoA + H(+). It catalyses the reaction a fatty acyl-CoA + glycine = an N-(fatty acyl)-glycine + CoA + H(+). Its function is as follows. Mitochondrial acyltransferase which transfers the acyl group to the N-terminus of glycine. Conjugates numerous substrates, such as arachidonoyl-CoA and saturated medium and long-chain acyl-CoAs ranging from chain-length C8:0-CoA to C18:0-CoA, to form a variety of N-acylglycines. Shows a preference for monounsaturated fatty acid oleoyl-CoA (C18:1-CoA) as an acyl donor. Does not exhibit any activity toward C22:6-CoA and chenodeoxycholoyl-CoA, nor toward serine or alanine. In Homo sapiens (Human), this protein is Glycine N-acyltransferase-like protein 2.